A 145-amino-acid polypeptide reads, in one-letter code: Transcriptional regulator SlyA (145 aa).

One can recognise an HTH marR-type domain in the interval E2–K135. A DNA-binding region (H-T-H motif) is located at residues Q49–E72.

The protein belongs to the SlyA family. As to quaternary structure, homodimer.

Functionally, transcription regulator that can specifically activate or repress expression of target genes. Regulates genes involved in production of antibiotic and exoenzyme virulence determinants in the phytopathogen. Required for the expression of the virulence protein evf during Drosophila melanogaster infection. The sequence is that of Transcriptional regulator SlyA from Pectobacterium carotovorum subsp. carotovorum (Erwinia carotovora subsp. carotovora).